A 131-amino-acid polypeptide reads, in one-letter code: Fluoride-specific ion channel FluC 1 (131 aa).

4 consecutive transmembrane segments (helical) span residues 4-24, 40-60, 73-93, and 108-128; these read LALP…GAWL, HWGT…VLAL, LILL…TFAV, and LVLA…GVGL. G83 and S86 together coordinate Na(+).

Belongs to the fluoride channel Fluc/FEX (TC 1.A.43) family.

Its subcellular location is the cell inner membrane. It carries out the reaction fluoride(in) = fluoride(out). Its activity is regulated as follows. Na(+) is not transported, but it plays an essential structural role and its presence is essential for fluoride channel function. Fluoride-specific ion channel. Important for reducing fluoride concentration in the cell, thus reducing its toxicity. The sequence is that of Fluoride-specific ion channel FluC 1 from Prochlorococcus marinus (strain MIT 9313).